We begin with the raw amino-acid sequence, 486 residues long: MTQTTVKNVKNYIGGEWIESRTEKTEDVFNPATGEVIAQVPISTTEDVHHAIEVANEAFKTWKEVPVPKRARILFKYQQLLVEHWEELAKLITLENGKNYAEAYGEVQRGIENVEFATGAPSLMMGEQLASIATELESGVYRYPIGVIGGITPFNFPMMVPCWMFPMAIATGNTFVMKPSERTPLLANRLAELLEEAGLPNGVFNIVHGAHDVVNGLLDHKKVAAISFVGSQPVAEYVYKRGTQNLKRVQALAGAKNHSIVLSDANLENATTQILNAAFGSAGERCMAASVVAVEEDVADEFVTLLTQKANEIKIGNGLDEGVFLGPVIRDQHKERTLQYIESGEEEGANLVRDGRTDEAAKQEGYFVGPTIFDHVTSEMKIWQDEIFAPVLSIARVNNLEEGVDLANESRFANGACIFTRDGGSVRRFRETIDAGMLGVNIGVPAPMAFLPFSGWKDSFYGDLHANGKDGLQFYTRKKVLTTKWV.

5 residues coordinate NAD(+): F154, K178, E181, R182, and S231. C286 (nucleophile) is an active-site residue. E386 is a binding site for NAD(+).

It belongs to the aldehyde dehydrogenase family. IolA subfamily. As to quaternary structure, homotetramer.

The catalysed reaction is 3-oxopropanoate + NAD(+) + CoA + H2O = hydrogencarbonate + acetyl-CoA + NADH + H(+). It carries out the reaction 2-methyl-3-oxopropanoate + NAD(+) + CoA + H2O = propanoyl-CoA + hydrogencarbonate + NADH + H(+). It participates in polyol metabolism; myo-inositol degradation into acetyl-CoA; acetyl-CoA from myo-inositol: step 7/7. Its function is as follows. Catalyzes the oxidation of malonate semialdehyde (MSA) and methylmalonate semialdehyde (MMSA) into acetyl-CoA and propanoyl-CoA, respectively. Is involved in a myo-inositol catabolic pathway. Bicarbonate, and not CO2, is the end-product of the enzymatic reaction. The protein is Malonate-semialdehyde dehydrogenase 2 of Oceanobacillus iheyensis (strain DSM 14371 / CIP 107618 / JCM 11309 / KCTC 3954 / HTE831).